The sequence spans 309 residues: Protein FdhE homolog (309 aa).

This sequence belongs to the FdhE family.

The protein resides in the cytoplasm. Its function is as follows. Necessary for formate dehydrogenase activity. The sequence is that of Protein FdhE homolog from Serratia proteamaculans (strain 568).